A 380-amino-acid chain; its full sequence is Erythronate-4-phosphate dehydrogenase (380 aa).

Substrate contacts are provided by S45 and T66. D146 contributes to the NAD(+) binding site. The active site involves R207. Residue D232 coordinates NAD(+). E237 is a catalytic residue. H254 serves as the catalytic Proton donor. G257 provides a ligand contact to NAD(+). Residue Y258 coordinates substrate.

The protein belongs to the D-isomer specific 2-hydroxyacid dehydrogenase family. PdxB subfamily. Homodimer.

The protein localises to the cytoplasm. It catalyses the reaction 4-phospho-D-erythronate + NAD(+) = (R)-3-hydroxy-2-oxo-4-phosphooxybutanoate + NADH + H(+). It participates in cofactor biosynthesis; pyridoxine 5'-phosphate biosynthesis; pyridoxine 5'-phosphate from D-erythrose 4-phosphate: step 2/5. Its function is as follows. Catalyzes the oxidation of erythronate-4-phosphate to 3-hydroxy-2-oxo-4-phosphonooxybutanoate. The polypeptide is Erythronate-4-phosphate dehydrogenase (Marinomonas sp. (strain MWYL1)).